Consider the following 723-residue polypeptide: Lim and transglutaminase domain protein ltd-1 (723 aa).

The LIM zinc-binding domain maps to 5-72 (QHCNRCGKQV…SNHVPIAGPH (68 aa)).

Belongs to the transglutaminase-like superfamily. Expressed in the Y and U rectal epithelial cells, in marginal cells of the terminal bulb and isthmus of the pharynx (at protein level).

It is found in the cytoplasm. The protein resides in the cytoskeleton. Cytoskeleton-associated protein. May play a role in hypodermal cell development. The chain is Lim and transglutaminase domain protein ltd-1 from Caenorhabditis elegans.